The primary structure comprises 2567 residues: Unconventional myosin-XVIIIb (2567 aa).

Residues 41 to 508 (LVRGTEKEAK…SRDSDQAPED (468 aa)) are disordered. A compositionally biased stretch (basic and acidic residues) spans 44-54 (GTEKEAKEARQ). Positions 71–104 (SISQPNSKSSSGTRSGSQQISQDDQSSSPGSSDI) are enriched in low complexity. 2 stretches are compositionally biased toward basic and acidic residues: residues 105 to 116 (LGKESEGSRSPD) and 160 to 176 (LDPD…HDAP). The span at 196-206 (SRTPCGSQAST) shows a compositional bias: polar residues. Basic and acidic residues-rich tracts occupy residues 251–265 (TELK…DRQG), 278–287 (RPGKAEKEGA), and 326–349 (SKWD…EKTG). Positions 350 to 362 (EPQTQMEKTSQVQ) are enriched in polar residues. 4 stretches are compositionally biased toward basic and acidic residues: residues 367–377 (DDLRMGEKAGE), 410–420 (SQTEKGCEAPK), 471–485 (LEKD…KENQ), and 492–508 (EEGK…APED). The Myosin motor domain maps to 571-1333 (DQVEDLASLI…VISRLEKQRE (763 aa)). 660 to 667 (GWSGAGKT) lines the ATP pocket. The tract at residues 1208 to 1232 (VESRSGQESPPPPQPGRDKPGAGGP) is disordered. The tract at residues 1213–1240 (GQESPPPPQPGRDKPGAGGPLALDIPAL) is GPA. Ser-1216 is modified (phosphoserine). In terms of domain architecture, IQ spans 1336-1365 (VSQSIVLFQAACKGFLSRQEFKKLKIRRLA). Coiled coils occupy residues 1396-1783 (SATI…GLIG), 1825-1961 (KTSV…STVD), and 2014-2090 (ESQQ…VASS). The interval 1426-2083 (NELRQNTDLL…IRRIADLQAA (658 aa)) is tail. Residue Ser-1829 is modified to Phosphoserine. Over residues 2139–2153 (TMRTPSRQSATSSRI) the composition is skewed to polar residues. Disordered regions lie at residues 2139–2194 (TMRT…PVSP) and 2217–2249 (STER…PSAA). Over residues 2158-2167 (INEEAGDTER) the composition is skewed to basic and acidic residues. Residues 2168–2185 (TQSALALSRARSTNVHSK) show a composition bias toward polar residues. Position 2193 is a phosphoserine (Ser-2193). Polar residues predominate over residues 2227–2238 (PLASRSTNTSPL). Phosphoserine occurs at positions 2296 and 2309. The interval 2357–2376 (SRPSMGRKLSSPTTPRDMLL) is disordered. Ser-2377 carries the phosphoserine modification. Disordered stretches follow at residues 2444-2471 (FLPA…SQRS) and 2494-2567 (KSPE…YLQK). Basic and acidic residues predominate over residues 2494-2504 (KSPEPKEDPAH). Low complexity predominate over residues 2506–2520 (SDSSSSSGSIVSFKS). Residues 2537-2556 (GGERTSPERREPGTGRKDDD) are compositionally biased toward basic and acidic residues.

It belongs to the TRAFAC class myosin-kinesin ATPase superfamily. Myosin family. Homodimer. May interact with F actin through the GPA motif (Gly/Pro/Ala-rich). In terms of tissue distribution, selectively expressed in cardiac and skeletal muscles. Weakly expressed in testis, pancreas, placenta, prostate, lung and thymus.

It localises to the cytoplasm. It is found in the nucleus. The protein resides in the myofibril. Its subcellular location is the sarcomere. In terms of biological role, may be involved in intracellular trafficking of the muscle cell when in the cytoplasm, whereas entering the nucleus, may be involved in the regulation of muscle specific genes. May play a role in the control of tumor development and progression; restored MYO18B expression in lung cancer cells suppresses anchorage-independent growth. The protein is Unconventional myosin-XVIIIb (MYO18B) of Homo sapiens (Human).